A 735-amino-acid polypeptide reads, in one-letter code: MCTRPGLAALLVLMTSCASSFSRADTQSASAAALSAASADAQAARQQQEQHLVAQQQQQQQQQQQHSNNNEPQQRAPSLDPYYRSLLDGSQGGQLFAPAQPVSQPDLSPDFSNPMGSSLSQSGTPEDSDTKVDTRGAAPKFFGKKRGQAPRFFGKKRAMAPKFFGKKSSEFPTSNSEQLALDTRGSPRFFGKKSFPESNREQRGSPRFFGKKRFDENVDIDERAAPRFFGKKSSGESAGDSGYISVASRGSPRFFGKKQDDDIMIAARGSPRFFGKKRSDDNVALDLRGSPRFFGKRQSSDLDDEISVALRGSPRFFGKKRADDEDILLGERGSPRFFGKKRANDENISFSLRGSPRFFGKKRSDESDDDNIGLVARGSPRFFGKKRSDETDDENIGLMARGSPRFFGRKRSDGLDDGGNIIDVATRGSPRFFGKKRSNSDSSDKSSDSALSSSESGRQTRQAPRFFGKRYVDEHHVSKRAAATAFPLIIEARQAPRFFGKREYRYPPRGSPHFIGKRFSLYRSPGKYSLSSPYMSAKEFKETFRRSDPFFMGKRTAELNEEGSDDFTNDDTDDENEYDETVLFKRGAPRFVGKRGAPRFLGRRGAPRFIGRRGAPRFVGKRGPPRFIGKRDLDWYQKALCAEADILELDDCADFLGNDDVKRQAPRFIGRKRGEDVSERDYAQLLEALSRLQAIKQIKARIQNEKRLWVPGMVGRRSEYNLGPFDEFVDESMER.

The N-terminal stretch at 1–20 (MCTRPGLAALLVLMTSCASS) is a signal peptide. Positions 21-135 (FSRADTQSAS…EDSDTKVDTR (115 aa)) are excised as a propeptide. Over residues 33–65 (ALSAASADAQAARQQQEQHLVAQQQQQQQQQQQ) the composition is skewed to low complexity. Disordered stretches follow at residues 33–212 (ALSA…FGKK) and 229–251 (FGKK…SRGS). Composition is skewed to polar residues over residues 66–76 (HSNNNEPQQRA) and 101–125 (PVSQ…SGTP). Phenylalanine amide is present on residues phenylalanine 142, phenylalanine 153, and phenylalanine 164. A compositionally biased stretch (basic residues) spans 142–159 (FGKKRGQAPRFFGKKRAM). A propeptide spanning residues 168–184 (SSEFPTSNSEQLALDTR) is cleaved from the precursor. Phenylalanine 190 is modified (phenylalanine amide). Positions 194–203 (SFPESNREQR) are excised as a propeptide. The span at 194-204 (SFPESNREQRG) shows a compositional bias: basic and acidic residues. Residues phenylalanine 209 and phenylalanine 229 each carry the phenylalanine amide modification. A propeptide spans 214–229 (FDENVDIDERAAPRFF) (linker peptide). The propeptide occupies 233–249 (SSGESAGDSGYISVASR). A Phenylalanine amide modification is found at phenylalanine 255. Positions 259 to 267 (QDDDIMIAA) are cleaved as a propeptide — linker peptide. Residue phenylalanine 274 is modified to Phenylalanine amide. The propeptide at 279–287 (SDDNVALDL) is linker peptide. Residue phenylalanine 294 is modified to Phenylalanine amide. Positions 298–311 (QSSDLDDEISVALR) are excised as a propeptide. At phenylalanine 317 the chain carries Phenylalanine amide. Residues 321–332 (RADDEDILLGER) constitute a propeptide that is removed on maturation. The residue at position 338 (phenylalanine 338) is a Phenylalanine amide. The propeptide occupies 342 to 353 (RANDENISFSLR). Disordered stretches follow at residues 352 to 373 (LRGS…DNIG) and 381 to 400 (RFFG…GLMA). At phenylalanine 359 the chain carries Phenylalanine amide. Residues 363 to 377 (RSDESDDDNIGLVAR) constitute a propeptide that is removed on maturation. Residue phenylalanine 383 is modified to Phenylalanine amide. Residues 387-401 (RSDETDDENIGLMAR) constitute a propeptide that is removed on maturation. Phenylalanine amide is present on phenylalanine 407. Residues 412-426 (SDGLDDGGNIIDVAT) constitute a propeptide, linker peptide. The tract at residues 430-464 (PRFFGKKRSNSDSSDKSSDSALSSSESGRQTRQAP) is disordered. Phenylalanine 433 bears the Phenylalanine amide mark. The propeptide occupies 437–461 (RSNSDSSDKSSDSALSSSESGRQTR). The segment covering 438 to 447 (SNSDSSDKSS) has biased composition (basic and acidic residues). Residue glutamine 462 is modified to Pyrrolidone carboxylic acid. Phenylalanine 467 is subject to Phenylalanine amide. The propeptide occupies 471–493 (YVDEHHVSKRAAATAFPLIIEAR). Glutamine 494 is subject to Pyrrolidone carboxylic acid. Phenylalanine 499 carries the phenylalanine amide modification. The propeptide occupies 503–509 (EYRYPPR). Isoleucine 515 carries the isoleucine amide modification. The propeptide occupies 519 to 546 (FSLYRSPGKYSLSSPYMSAKEFKETFRR). Position 552 is a methionine amide (methionine 552). The propeptide occupies 556-585 (TAELNEEGSDDFTNDDTDDENEYDETVLFK). The residue at position 592 (valine 592) is a Valine amide. Leucine 601 is subject to Leucine amide. Residue isoleucine 610 is modified to Isoleucine amide. Valine 619 carries the post-translational modification Valine amide. An Isoleucine amide modification is found at isoleucine 628. Residues 632 to 661 (DLDWYQKALCAEADILELDDCADFLGNDDV) constitute a propeptide, linker peptide. A Pyrrolidone carboxylic acid modification is found at glutamine 664. An Isoleucine amide modification is found at isoleucine 669. Residues 674 to 705 (GEDVSERDYAQLLEALSRLQAIKQIKARIQNE) constitute a propeptide, linker peptide. Residue valine 714 is modified to Valine amide. The propeptide occupies 715 to 735 (GRRSEYNLGPFDEFVDESMER).

In terms of tissue distribution, expressed in the CNS and peripheral tissues (the digestive tract, vasculature, and the reproductive organs).

It is found in the secreted. In terms of biological role, has some structural and functional features similar to vertebrate opioid peptides. AMRPs are inhibitory on Aplysia esophagus, penis retractor muscle, and body wall muscle. This is MIP-related peptides (MRP) from Aplysia californica (California sea hare).